Here is a 96-residue protein sequence, read N- to C-terminus: Co-chaperonin GroES (96 aa).

It belongs to the GroES chaperonin family. As to quaternary structure, heptamer of 7 subunits arranged in a ring. Interacts with the chaperonin GroEL.

Its subcellular location is the cytoplasm. Together with the chaperonin GroEL, plays an essential role in assisting protein folding. The GroEL-GroES system forms a nano-cage that allows encapsulation of the non-native substrate proteins and provides a physical environment optimized to promote and accelerate protein folding. GroES binds to the apical surface of the GroEL ring, thereby capping the opening of the GroEL channel. The sequence is that of Co-chaperonin GroES from Paracidovorax citrulli (strain AAC00-1) (Acidovorax citrulli).